Reading from the N-terminus, the 438-residue chain is MESQQLHQNPRSLHGSAYASVTSKEVPSNQDPLAVSASNLPEFDRDSTKVNSQQETTPGTSAVPENHHHVSPQPASVPPPQNGQYQQHGMMTPNKAMASNWAHYQQPSMMTCSHYQTSPAYYQPDPHYPLPQYIPPLSTSSPDPIDSQNQHSEVPQAETKVRNNVLPPHTLTSEENFSTWVKFYIRFLKNSNLGDIIPNDQGEIKRQMTYEEHAYIYNTFQAFAPFHLLPTWVKQILEINYADILTVLCKSVSKMQTNNQELKDWIALANLEYDGSTSADTFEITVSTIIQRLKENNINVSDRLACQLILKGLSGDFKYLRNQYRTKTNMKLSQLFAEIQLIYDENKIMNLNKPSQYKQHSEYKNVSRTSPNTTNTKVTTRNYQRTNSSKPRAAKAHNIATSSKFSRVNNDHINESTVSSQYLSDDNELSLRPATERI.

3 stretches are compositionally biased toward polar residues: residues 1 to 11 (MESQQLHQNPR), 19 to 39 (ASVT…SASN), and 49 to 60 (KVNSQQETTPGT). Disordered stretches follow at residues 1–88 (MESQ…YQQH), 365–397 (NVSR…AKAH), and 419–438 (SSQY…TERI). The tract at residues 295-397 (ENNINVSDRL…SSKPRAAKAH (103 aa)) is RNA-binding. Residues 369-382 (TSPNTTNTKVTTRN) are compositionally biased toward low complexity.

Homotrimer.

It is found in the cytoplasm. Capsid protein (CA) is the structural component of the virus-like particle (VLP), forming the shell that encapsulates the retrotransposons dimeric RNA genome. The particles are assembled from trimer-clustered units and there are holes in the capsid shells that allow for the diffusion of macromolecules. CA also has nucleocapsid-like chaperone activity, promoting primer tRNA(i)-Met annealing to the multipartite primer-binding site (PBS), dimerization of Ty2 RNA and initiation of reverse transcription. This is Transposon Ty2-C Gag polyprotein (TY2A-C) from Saccharomyces cerevisiae (strain ATCC 204508 / S288c) (Baker's yeast).